A 521-amino-acid chain; its full sequence is (+)-kolavenyl diphosphate synthase (521 aa).

Residues Asp311 and Asp313 each contribute to the Mg(2+) site. A DXDD motif motif is present at residues 311–314; sequence DGDD.

This sequence belongs to the terpene synthase family. It depends on Mg(2+) as a cofactor.

The catalysed reaction is (2E,6E,10E)-geranylgeranyl diphosphate = (+)-kolavenyl diphosphate. Its function is as follows. Involved in the biosynthesis of (+)-O-methylkolavelool. Catalyzes the conversion of geranylgeranyl diphosphate into (+)-kolavenyl diphosphate. This chain is (+)-kolavenyl diphosphate synthase, found in Herpetosiphon aurantiacus (strain ATCC 23779 / DSM 785 / 114-95).